The following is an 87-amino-acid chain: Small ribosomal subunit protein bS20 (87 aa).

The disordered stretch occupies residues 1–28 (MANIKSQQKRNRTNERARLRNKSVKSSL).

This sequence belongs to the bacterial ribosomal protein bS20 family.

Binds directly to 16S ribosomal RNA. The protein is Small ribosomal subunit protein bS20 of Mycobacterium marinum (strain ATCC BAA-535 / M).